A 911-amino-acid chain; its full sequence is MFAPLLKKLFGSKNEREVKRMLKAVQSVNALEEQMIALSDEQLRGKTEEFKARLAKGETLDQLLAEAFAVAREAGKRVMGMRHFDVQLIGGMTLHEGKIAEMRTGEGKTLVGTLAVYLNALSGKGVHVVTVNEYLARRDANWMRPLYEFLGLTVGIVTPFQPPEEKRAAYAADITYGTNNEFGFDYLRDNMAFSLEDKFQRELNFAVIDEVDSILIDEARTPLIISGQAEDSSKLYTEINRLIPRLKQHIEEEEGVVTQEGHYKVDEKSRQVELNEAGHQYVEEMLTAAGLLAEGESLYSAHNLGLLTHVYAGLRAHTLFNRNVEYIVQNGQVILIDEHTGRTMPGRRLSEGLHQAIEAKEGVNIQAESQTLASTTFQNYFRLYNKLSGMTGTADTEAFEFRQIYGLDVVVIPTNKPIARKDFNDLVYLTQEEKYQAIITDIKDCQAQGRPILVGTASIETSEYVSQLLQKEKIEHKVLNAKYHDKEAEIIAQAGRPGAVTIATNMAGRGTDILLGGNWEVEVAALENPTDEQIAQIKTEWQKRHQQVIEAGGLHVIASERHESRRIDNQLRGRAGRQGDPGSSRFYLSLEDNLMRIFASDRVKNFMKALGMQSGEAIEHRMVTNAIEKAQRKVEGRNFDMRKQLLEFDDVANEQRKVIYHMRNSLLAAENVGDTIAEFREEVLTAAINGHIPPQSMPEQWDVAGLESTLQSDFGLKLPIQQWLDEDDKLYEETLRERILAELVAAYNEKETQASAEALRTFEKQILLRVLDDLWKDHLSTMDHLRHGIHLRGYAQKNPKQEYKRESFALFQELLESIKRDTIRVLSHVQVRREDPAEEEARLRREAEALAERMQFQHAEASALAAEQDGAEEGAVATATAPVRSENKVGRNEPCPCGSGKKYKHCHGQIN.

Residues glutamine 87, 105–109 (GEGKT), and aspartate 512 each bind ATP. A disordered region spans residues 865-892 (AAEQDGAEEGAVATATAPVRSENKVGRN). The span at 873 to 883 (EGAVATATAPV) shows a compositional bias: low complexity. Zn(2+)-binding residues include cysteine 895, cysteine 897, cysteine 906, and histidine 907.

This sequence belongs to the SecA family. In terms of assembly, monomer and homodimer. Part of the essential Sec protein translocation apparatus which comprises SecA, SecYEG and auxiliary proteins SecDF-YajC and YidC. Requires Zn(2+) as cofactor.

The protein resides in the cell inner membrane. It is found in the cytoplasm. It catalyses the reaction ATP + H2O + cellular proteinSide 1 = ADP + phosphate + cellular proteinSide 2.. In terms of biological role, part of the Sec protein translocase complex. Interacts with the SecYEG preprotein conducting channel. Has a central role in coupling the hydrolysis of ATP to the transfer of proteins into and across the cell membrane, serving both as a receptor for the preprotein-SecB complex and as an ATP-driven molecular motor driving the stepwise translocation of polypeptide chains across the membrane. The chain is Protein translocase subunit SecA from Ectopseudomonas mendocina (strain ymp) (Pseudomonas mendocina).